The following is a 191-amino-acid chain: Elongation factor P (191 aa).

It belongs to the elongation factor P family.

The protein localises to the cytoplasm. It functions in the pathway protein biosynthesis; polypeptide chain elongation. Its function is as follows. Involved in peptide bond synthesis. Stimulates efficient translation and peptide-bond synthesis on native or reconstituted 70S ribosomes in vitro. Probably functions indirectly by altering the affinity of the ribosome for aminoacyl-tRNA, thus increasing their reactivity as acceptors for peptidyl transferase. This chain is Elongation factor P, found in Bartonella tribocorum (strain CIP 105476 / IBS 506).